The chain runs to 260 residues: Global transcriptional regulator CodY (260 aa).

Residues 1-159 (MPNLLEKTRK…SSTVVGIQLL (159 aa)) form a GAF domain region. The H-T-H motif DNA-binding region spans 207–226 (ASVIADRIGITRSVIVNALR).

It belongs to the CodY family.

It localises to the cytoplasm. Functionally, DNA-binding global transcriptional regulator which is involved in the adaptive response to starvation and acts by directly or indirectly controlling the expression of numerous genes in response to nutrient availability. During rapid exponential growth, CodY is highly active and represses genes whose products allow adaptation to nutrient depletion. The sequence is that of Global transcriptional regulator CodY from Streptococcus equi subsp. zooepidemicus (strain H70).